A 499-amino-acid polypeptide reads, in one-letter code: Cysteine--tRNA ligase (499 aa).

C30 contacts Zn(2+). The short motif at 32 to 42 is the 'HIGH' region element; sequence PTVYDRAHLGN. The Zn(2+) site is built by C221, H246, and E250. A 'KMSKS' region motif is present at residues 279–283; that stretch reads KMSKS. Residue K282 coordinates ATP.

Belongs to the class-I aminoacyl-tRNA synthetase family. Monomer. Zn(2+) serves as cofactor.

It is found in the cytoplasm. It carries out the reaction tRNA(Cys) + L-cysteine + ATP = L-cysteinyl-tRNA(Cys) + AMP + diphosphate. This chain is Cysteine--tRNA ligase, found in Cereibacter sphaeroides (strain ATCC 17023 / DSM 158 / JCM 6121 / CCUG 31486 / LMG 2827 / NBRC 12203 / NCIMB 8253 / ATH 2.4.1.) (Rhodobacter sphaeroides).